We begin with the raw amino-acid sequence, 225 residues long: Pathogenesis-related 5 protein Jun a 3.0101 (225 aa).

The first 26 residues, 1-26, serve as a signal peptide directing secretion; it reads MARVSELAFLLAATLAISLHMQEAGV. Disulfide bonds link cysteine 35-cysteine 224, cysteine 76-cysteine 86, cysteine 91-cysteine 97, cysteine 139-cysteine 213, cysteine 144-cysteine 197, cysteine 152-cysteine 162, cysteine 166-cysteine 175, and cysteine 176-cysteine 184. IgE-binding stretches follow at residues 146–157, 158–170, and 178–191; these read ADINAVCPSELK, VDGG…NVFK, and NAYV…NYSK.

Belongs to the thaumatin family. As to expression, expressed in pollen (at protein level).

The polypeptide is Pathogenesis-related 5 protein Jun a 3.0101 (Juniperus ashei (Ozark white cedar)).